The sequence spans 275 residues: Phosphonoacetaldehyde hydrolase (275 aa).

Residue Asp-15 is the Nucleophile of the active site. Residues Asp-15 and Ala-17 each contribute to the Mg(2+) site. Lys-56 functions as the Schiff-base intermediate with substrate in the catalytic mechanism. A Mg(2+)-binding site is contributed by Asp-189.

This sequence belongs to the HAD-like hydrolase superfamily. PhnX family. Homodimer. The cofactor is Mg(2+).

It catalyses the reaction phosphonoacetaldehyde + H2O = acetaldehyde + phosphate + H(+). Its function is as follows. Involved in phosphonate degradation. This Pseudomonas aeruginosa (strain UCBPP-PA14) protein is Phosphonoacetaldehyde hydrolase.